Here is a 488-residue protein sequence, read N- to C-terminus: Annexin A7 (488 aa).

Positions 1–18 (MSYPGYPPTGYPPFPGYP) are enriched in pro residues. 2 disordered regions span residues 1–49 (MSYP…YPQV) and 71–143 (GYPG…PTYP). The segment at 1–143 (MSYPGYPPTG…QYPGGQPTYP (143 aa)) is repeat-rich region. Residues 5–20 (GYPPTGYPPFPGYPPA) are 3 X 5 AA tandem repeats of G-Y-P-P-X. Over residues 89 to 102 (PGQGFGVPPGGAGF) the composition is skewed to gly residues. 4 Annexin repeats span residues 185–256 (FDAI…ALFM), 257–328 (PPTY…SMCQ), 340–412 (QMAQ…TILQ), and 416–487 (NRPA…AIVG). At lysine 233 the chain carries N6-acetyllysine.

This sequence belongs to the annexin family. In terms of assembly, interacts with PDCD6. In terms of tissue distribution, isoform 1 is expressed in brain, heart and skeletal muscle. Isoform 2 is more abundant in liver, lung, kidney, spleen, fibroblasts and placenta.

Functionally, calcium/phospholipid-binding protein which promotes membrane fusion and is involved in exocytosis. The sequence is that of Annexin A7 (ANXA7) from Homo sapiens (Human).